A 333-amino-acid chain; its full sequence is tRNA uridine(34) hydroxylase (333 aa).

The region spanning 123 to 217 is the Rhodanese domain; that stretch reads SDPEVVLVDT…YLEEVNKAES (95 aa). C177 acts as the Cysteine persulfide intermediate in catalysis. Residues 313 to 327 show a composition bias toward basic and acidic residues; the sequence is QKKEALRKQSAEKNK. The interval 313-333 is disordered; the sequence is QKKEALRKQSAEKNKAKQANA.

This sequence belongs to the TrhO family.

It catalyses the reaction uridine(34) in tRNA + AH2 + O2 = 5-hydroxyuridine(34) in tRNA + A + H2O. In terms of biological role, catalyzes oxygen-dependent 5-hydroxyuridine (ho5U) modification at position 34 in tRNAs. This Shewanella oneidensis (strain ATCC 700550 / JCM 31522 / CIP 106686 / LMG 19005 / NCIMB 14063 / MR-1) protein is tRNA uridine(34) hydroxylase.